The primary structure comprises 749 residues: Cytosolic phospholipase A2 (749 aa).

The phospholipid binding stretch occupies residues 1–178 (MSFIDPYQHI…MKKLLGPKNS (178 aa)). Residue Ser-2 is modified to Phosphoserine. Residues 6-122 (PYQHIIVEHQ…KVGEKKEVPF (117 aa)) enclose the C2 domain. Positions 40, 41, 43, 65, 93, 94, and 95 each coordinate Ca(2+). In terms of domain architecture, PLA2c spans 140–740 (SCPDLRFSMA…SNVEARRFFN (601 aa)). The active-site Nucleophile is Ser-228. Residue Thr-268 is modified to Phosphothreonine. The segment at 409 to 457 (GSQSRGSTMEEELENITTKHIVSNDSSDSDDESHEPKGTENEDAGSDYQ) is disordered. Phosphoserine occurs at positions 434, 435, and 437. At Ser-505 the chain carries Phosphoserine; by MAPK. Ser-515 is modified (phosphoserine). Lys-541 is covalently cross-linked (Glycyl lysine isopeptide (Lys-Gly) (interchain with G-Cter in SUMO2)). Asp-549 serves as the catalytic Proton acceptor. A Glycyl lysine isopeptide (Lys-Gly) (interchain with G-Cter in SUMO2) cross-link involves residue Lys-606. Phosphoserine is present on residues Ser-727 and Ser-729.

In terms of assembly, interacts with KAT5. Post-translationally, phosphorylated at both Ser-505 and Ser-727 in response to mitogenic stimuli. Expressed in various cells and tissues such as macrophages, neutrophils, fibroblasts and lung endothelium. Expressed in platelets (at protein level).

The protein localises to the cytoplasm. It is found in the golgi apparatus membrane. Its subcellular location is the nucleus envelope. It catalyses the reaction a 1,2-diacyl-sn-glycero-3-phosphocholine + H2O = a 1-acyl-sn-glycero-3-phosphocholine + a fatty acid + H(+). The enzyme catalyses a 1-O-alkyl-2-acyl-sn-glycero-3-phosphocholine + H2O = a 1-O-alkyl-sn-glycero-3-phosphocholine + a fatty acid + H(+). The catalysed reaction is a 1-acyl-sn-glycero-3-phosphocholine + H2O = sn-glycerol 3-phosphocholine + a fatty acid + H(+). It carries out the reaction 1-hexadecanoyl-2-(5Z,8Z,11Z,14Z-eicosatetraenoyl)-sn-glycero-3-phosphocholine + H2O = 1-hexadecanoyl-sn-glycero-3-phosphocholine + (5Z,8Z,11Z,14Z)-eicosatetraenoate + H(+). It catalyses the reaction 1,2-di-(5Z,8Z,11Z,14Z-eicosatetraenoyl)-sn-glycero-3-phosphocholine + H2O = 1-(5Z,8Z,11Z,14Z-eicosatetraenoyl)-sn-glycero-3-phosphocholine + (5Z,8Z,11Z,14Z)-eicosatetraenoate + H(+). The enzyme catalyses 1-octadecanoyl-2-(5Z,8Z,11Z,14Z-eicosatetraenoyl)-sn-glycero-3-phosphocholine + H2O = 1-octadecanoyl-sn-glycero-3-phosphocholine + (5Z,8Z,11Z,14Z)-eicosatetraenoate + H(+). The catalysed reaction is 1-hexadecanoyl-2-(9Z,12Z-octadecadienoyl)-sn-glycero-3-phosphocholine + H2O = (9Z,12Z)-octadecadienoate + 1-hexadecanoyl-sn-glycero-3-phosphocholine + H(+). It carries out the reaction 1-octadecanoyl-2-(9Z,12Z,15Z-octadecatrienoyl)-sn-glycero-3-phosphocholine + H2O = (9Z,12Z,15Z)-octadecatrienoate + 1-octadecanoyl-sn-glycero-3-phosphocholine + H(+). It catalyses the reaction 1-(5Z,8Z,11Z,14Z-eicosatetraenoyl)-2-hexadecanoyl-sn-glycero-3-phosphocholine + H2O = 1-(5Z,8Z,11Z,14Z-eicosatetraenoyl)-sn-glycero-3-phosphocholine + hexadecanoate + H(+). The enzyme catalyses 1-O-hexadecyl-2-(5Z,8Z,11Z,14Z)-eicosatetraenoyl-sn-glycero-3-phosphocholine + H2O = 1-O-hexadecyl-sn-glycero-3-phosphocholine + (5Z,8Z,11Z,14Z)-eicosatetraenoate + H(+). The catalysed reaction is 1,2-di-(9Z-octadecenoyl)-sn-glycero-3-phospho-(1'-sn-glycerol) + H2O = 1-(9Z-octadecenoyl)-sn-glycero-3-phospho-(1'-sn-glycerol) + (9Z)-octadecenoate + H(+). It carries out the reaction 1-octadecanoyl-2-(5Z,8Z,11Z,14Z-eicosatetraenoyl)-sn-glycero-3-phosphate + H2O = 1-octadecanoyl-sn-glycero-3-phosphate + (5Z,8Z,11Z,14Z)-eicosatetraenoate + H(+). It catalyses the reaction 1-hexadecanoyl-sn-glycero-3-phosphocholine + H2O = sn-glycerol 3-phosphocholine + hexadecanoate + H(+). The enzyme catalyses 2-(prostaglandin E2)-sn-glycero-3-phosphoethanolamine + H2O = sn-glycero-3-phosphoethanolamine + prostaglandin E2 + H(+). The catalysed reaction is 2-[(15S)-hydroxy-(5Z,8Z,11Z,13E)-eicosatetraenoyl]-sn-glycero-3-phosphocholine + H2O = (15S)-hydroxy-(5Z,8Z,11Z,13E)-eicosatetraenoate + sn-glycerol 3-phosphocholine + H(+). It carries out the reaction 2-[(15R)-hydroxy-(5Z,8Z,11Z,13E)-eicosatetraenoyl]-sn-glycero-3-phosphocholine + H2O = (15R)-hydroxy-(5Z,8Z,11Z,13E)-eicosatetraenoate + sn-glycerol 3-phosphocholine + H(+). It catalyses the reaction 2-(prostaglandin E2)-sn-glycero-3-phosphocholine + H2O = prostaglandin E2 + sn-glycerol 3-phosphocholine + H(+). The enzyme catalyses 2-[(11R)-hydroxy-(5Z,8Z,12E,14Z)-eicosatetraenoyl]-sn-glycero-3-phosphocholine + H2O = (11R)-hydroxy-(5Z,8Z,12E,14Z)-eicosatetraenoate + sn-glycerol 3-phosphocholine + H(+). The catalysed reaction is 1-(5Z,8Z,11Z,14Z-eicosatetraenoyl)-2-O-hexadecyl-sn-glycero-3-phosphocholine + H2O = 2-O-hexadecyl-sn-glycero-3-phosphocholine + (5Z,8Z,11Z,14Z)-eicosatetraenoate + H(+). It carries out the reaction 1-octadecanoyl-2-(5Z,8Z,11Z,14Z-eicosatetraenoyl)-sn-glycero-3-phosphocholine + glycerol = 1-(5Z,8Z,11Z,14Z-eicosatetraenoyl)-glycerol + 1-octadecanoyl-sn-glycero-3-phosphocholine. It catalyses the reaction 1-octadecanoyl-2-(9Z,12Z,15Z-octadecatrienoyl)-sn-glycero-3-phosphocholine + glycerol = 1-(9Z,12Z,15Z-octadecatrienoyl)-glycerol + 1-octadecanoyl-sn-glycero-3-phosphocholine. It functions in the pathway membrane lipid metabolism; glycerophospholipid metabolism. It participates in lipid metabolism; arachidonate metabolism. The protein operates within lipid metabolism; prostaglandin biosynthesis. Its pathway is lipid metabolism; leukotriene B4 biosynthesis. With respect to regulation, activated by cytosolic calcium, which is necessary for binding to membrane lipids. Activated by phosphorylation in response to mitogenic stimuli. Activated by ceramide-1-phosphate. Binding (via C2 domain) to ceramide-1-phosphate increases the affinity for membrane lipids. Can be activated by phosphoinositides in the absence of calcium. Inhibited by ANXA5 in a calcium- and substrate-dependent way. In terms of biological role, has primarily calcium-dependent phospholipase and lysophospholipase activities, with a major role in membrane lipid remodeling and biosynthesis of lipid mediators of the inflammatory response. Plays an important role in embryo implantation and parturition through its ability to trigger prostanoid production. Preferentially hydrolyzes the ester bond of the fatty acyl group attached at sn-2 position of phospholipids (phospholipase A2 activity). Selectively hydrolyzes sn-2 arachidonoyl group from membrane phospholipids, providing the precursor for eicosanoid biosynthesis via the cyclooxygenase pathway. In an alternative pathway of eicosanoid biosynthesis, hydrolyzes sn-2 fatty acyl chain of eicosanoid lysophopholipids to release free bioactive eicosanoids. Hydrolyzes the ester bond of the fatty acyl group attached at sn-1 position of phospholipids (phospholipase A1 activity) only if an ether linkage rather than an ester linkage is present at the sn-2 position. This hydrolysis is not stereospecific. Has calcium-independent phospholipase A2 and lysophospholipase activities in the presence of phosphoinositides. Has O-acyltransferase activity. Catalyzes the transfer of fatty acyl chains from phospholipids to a primary hydroxyl group of glycerol (sn-1 or sn-3), potentially contributing to monoacylglycerol synthesis. This Homo sapiens (Human) protein is Cytosolic phospholipase A2 (PLA2G4A).